A 563-amino-acid polypeptide reads, in one-letter code: Mitochondrial distribution and morphology protein 34 (563 aa).

Positions 1 to 195 (MAFNFNWSPL…LPAIIHRLSL (195 aa)) constitute an SMP-LTD domain. Disordered regions lie at residues 298–460 (ERGD…QIPT) and 535–563 (RHDK…PKAL). 2 stretches are compositionally biased toward polar residues: residues 303 to 332 (AGTT…FSNR) and 346 to 357 (SLVNMNSATTGL). A compositionally biased stretch (basic residues) spans 365-383 (SRSHTTRKKKNRVVNLRKS). Polar residues-rich tracts occupy residues 386-402 (TDNV…SITA) and 444-460 (PSRS…QIPT).

Belongs to the MDM34 family. As to quaternary structure, component of the ER-mitochondria encounter structure (ERMES) or MDM complex, composed of mmm1, mdm10, mdm12 and mdm34.

The protein resides in the mitochondrion outer membrane. Component of the ERMES/MDM complex, which serves as a molecular tether to connect the endoplasmic reticulum (ER) and mitochondria. Components of this complex are involved in the control of mitochondrial shape and protein biogenesis, and function in nonvesicular lipid trafficking between the ER and mitochondria. Mdm34 is required for the interaction of the ER-resident membrane protein mmm1 and the outer mitochondrial membrane-resident beta-barrel protein mdm10. This chain is Mitochondrial distribution and morphology protein 34, found in Sclerotinia sclerotiorum (strain ATCC 18683 / 1980 / Ss-1) (White mold).